A 170-amino-acid polypeptide reads, in one-letter code: Arginine repressor (170 aa).

This sequence belongs to the ArgR family.

The protein localises to the cytoplasm. The protein operates within amino-acid biosynthesis; L-arginine biosynthesis [regulation]. In terms of biological role, regulates arginine biosynthesis genes. The polypeptide is Arginine repressor (Bifidobacterium longum (strain NCC 2705)).